We begin with the raw amino-acid sequence, 137 residues long: ATP synthase epsilon chain (137 aa).

The protein belongs to the ATPase epsilon chain family. In terms of assembly, F-type ATPases have 2 components, CF(1) - the catalytic core - and CF(0) - the membrane proton channel. CF(1) has five subunits: alpha(3), beta(3), gamma(1), delta(1), epsilon(1). CF(0) has three main subunits: a, b and c.

Its subcellular location is the cell membrane. In terms of biological role, produces ATP from ADP in the presence of a proton gradient across the membrane. The polypeptide is ATP synthase epsilon chain (Streptococcus agalactiae serotype III (strain NEM316)).